A 248-amino-acid chain; its full sequence is Adenosylcobinamide-GDP ribazoletransferase (248 aa).

Helical transmembrane passes span 28–48 (LFWF…AGYL), 103–123 (VGSF…IVLV), 126–146 (LAFG…LVQV), 169–189 (AGIQ…LLLM), 193–213 (MLPS…MSLL), and 225–245 (VLGA…VFLA).

It belongs to the CobS family. Requires Mg(2+) as cofactor.

It localises to the cell inner membrane. The catalysed reaction is alpha-ribazole + adenosylcob(III)inamide-GDP = adenosylcob(III)alamin + GMP + H(+). It catalyses the reaction alpha-ribazole 5'-phosphate + adenosylcob(III)inamide-GDP = adenosylcob(III)alamin 5'-phosphate + GMP + H(+). The protein operates within cofactor biosynthesis; adenosylcobalamin biosynthesis; adenosylcobalamin from cob(II)yrinate a,c-diamide: step 7/7. Functionally, joins adenosylcobinamide-GDP and alpha-ribazole to generate adenosylcobalamin (Ado-cobalamin). Also synthesizes adenosylcobalamin 5'-phosphate from adenosylcobinamide-GDP and alpha-ribazole 5'-phosphate. This chain is Adenosylcobinamide-GDP ribazoletransferase, found in Chlorobium phaeobacteroides (strain BS1).